Consider the following 96-residue polypeptide: Large ribosomal subunit protein uL23 (96 aa).

It belongs to the universal ribosomal protein uL23 family. As to quaternary structure, part of the 50S ribosomal subunit. Contacts protein L29, and trigger factor when it is bound to the ribosome.

In terms of biological role, one of the early assembly proteins it binds 23S rRNA. One of the proteins that surrounds the polypeptide exit tunnel on the outside of the ribosome. Forms the main docking site for trigger factor binding to the ribosome. The polypeptide is Large ribosomal subunit protein uL23 (Solidesulfovibrio magneticus (strain ATCC 700980 / DSM 13731 / RS-1) (Desulfovibrio magneticus)).